The chain runs to 156 residues: MGKDNKEHKESKESKTVDNYEARMPAVLPFAKPLASKKLNKKVLKTVKKASKAKNVKRGVKEVVKALRKGEKGLVVIAGDISPADVISHIPVLCEDHSVPYIFIPSKQDLGAAGATKRPTSVVFIVPGSNKKKDGKNKEEEYKESFNEVVKEVQAL.

It belongs to the eukaryotic ribosomal protein eL8 family. As to quaternary structure, component of the small nucleolar ribonucleoprotein particles containing H/ACA-type snoRNAs (H/ACA snoRNPs). The protein component of the H/ACA snoRNP contains CBF5, GAR1, NHP2 and NOP10. The complex contains a stable core composed of CBF5 and NOP10, to which GAR1 and NHP2 subsequently bind. Interacts with SHQ1. Interacts with NAF1.

The protein resides in the nucleus. Its subcellular location is the nucleolus. In terms of biological role, non-catalytic component of the H/ACA small nucleolar ribonucleoprotein (H/ACA snoRNP), which catalyzes pseudouridylation of rRNA and is required for ribosome biogenesis. This involves the isomerization of uridine such that the ribose is subsequently attached to C5, instead of the normal N1. Pseudouridine ('psi') residues may serve to stabilize the conformation of rRNAs. The H/ACA snoRNP complex also mediates pseudouridylation of other types of RNAs. The H/ACA snoRNP complex mediates pseudouridylation at position 93 in U2 snRNA. Essential for growth. Directly binds H/ACA snoRNAs. The chain is H/ACA ribonucleoprotein complex subunit NHP2 (NHP2) from Saccharomyces cerevisiae (strain ATCC 204508 / S288c) (Baker's yeast).